A 761-amino-acid polypeptide reads, in one-letter code: Mitochondrial intermediate peptidase 1 (761 aa).

His530 is a Zn(2+) binding site. Residue Glu531 is part of the active site. 2 residues coordinate Zn(2+): His534 and His537.

The protein belongs to the peptidase M3 family. Zn(2+) serves as cofactor.

Its subcellular location is the mitochondrion matrix. It carries out the reaction Release of an N-terminal octapeptide as second stage of processing of some proteins imported into the mitochondrion.. Functionally, cleaves proteins, imported into the mitochondrion, to their mature size. While most mitochondrial precursor proteins are processed to the mature form in one step by mitochondrial processing peptidase (MPP), the sequential cleavage by MIP of an octapeptide after initial processing by MPP is a required step for a subgroup of nuclear-encoded precursor proteins destined for the matrix or the inner membrane. This chain is Mitochondrial intermediate peptidase 1 (OCT1), found in Cryptococcus neoformans var. neoformans serotype D (strain B-3501A) (Filobasidiella neoformans).